The chain runs to 773 residues: Cytochrome c oxidase subunit 1+2 (773 aa).

The segment at 1–491 (MKLLEIYDKQ…LIASYGSLIT (491 aa)) is COX1. Residues 41 to 61 (TMYITFSIFAGIIGTLLSLVI) traverse the membrane as a helical segment. Glutamate 64 serves as a coordination point for Ca(2+). Fe(II)-heme a is bound at residue histidine 85. The next 6 helical transmembrane spans lie at 87–111 (LIMI…NWFL), 130–150 (LWLI…GIGA), 173–193 (VGIL…INFL), 211–231 (LFVW…PVLA), 262–278 (LFHP…FGII), and 290–310 (IFGV…GFLV). Cu cation is bound at residue histidine 264. A cross-link (1'-histidyl-3'-tyrosine (His-Tyr)) is located at residues 264 to 268 (HPEVY). O2 is bound at residue tyrosine 268. The Cu cation site is built by histidine 314 and histidine 315. 2 consecutive transmembrane segments (helical) span residues 335-355 (IIAI…WGGV) and 362-382 (MLFV…GVVL). Mg(2+)-binding residues include histidine 392 and aspartate 393. The next 5 membrane-spanning stretches (helical) occupy residues 396–416 (YVVA…IFAG), 444–464 (FWTM…LGLA), 483–503 (IASY…VNIF), 555–575 (IFFY…RILW), and 604–624 (GTVI…LIAI). Histidine 400 is a binding site for heme a3. Histidine 402 is a Fe(II)-heme a binding site. The tract at residues 492–773 (AFGLLFFFVN…VQEYLGRLYK (282 aa)) is COX2. Cu cation-binding residues include histidine 709, cysteine 744, cysteine 748, and histidine 752.

It in the N-terminal section; belongs to the heme-copper respiratory oxidase family. The protein in the C-terminal section; belongs to the cytochrome c oxidase subunit 2 family. In terms of assembly, component of the cytochrome c oxidase (complex IV, CIV), a multisubunit enzyme composed of a catalytic core of 3 subunits and several supernumerary subunits. The complex exists as a monomer or a dimer and forms supercomplexes (SCs) in the inner mitochondrial membrane with ubiquinol-cytochrome c oxidoreductase (cytochrome b-c1 complex, complex III, CIII). Heme serves as cofactor. Cu cation is required as a cofactor.

The protein resides in the mitochondrion inner membrane. It catalyses the reaction 4 Fe(II)-[cytochrome c] + O2 + 8 H(+)(in) = 4 Fe(III)-[cytochrome c] + 2 H2O + 4 H(+)(out). Its pathway is energy metabolism; oxidative phosphorylation. Component of the cytochrome c oxidase, the last enzyme in the mitochondrial electron transport chain which drives oxidative phosphorylation. The respiratory chain contains 3 multisubunit complexes succinate dehydrogenase (complex II, CII), ubiquinol-cytochrome c oxidoreductase (cytochrome b-c1 complex, complex III, CIII) and cytochrome c oxidase (complex IV, CIV), that cooperate to transfer electrons derived from NADH and succinate to molecular oxygen, creating an electrochemical gradient over the inner membrane that drives transmembrane transport and the ATP synthase. Cytochrome c oxidase is the component of the respiratory chain that catalyzes the reduction of oxygen to water. Electrons originating from reduced cytochrome c in the intermembrane space (IMS) are transferred via the dinuclear copper A center (CU(A)) of subunit 2 and heme A of subunit 1 to the active site in subunit 1, a binuclear center (BNC) formed by heme A3 and copper B (CU(B)). The BNC reduces molecular oxygen to 2 water molecules using 4 electrons from cytochrome c in the IMS and 4 protons from the mitochondrial matrix. In Dictyostelium citrinum (Slime mold), this protein is Cytochrome c oxidase subunit 1+2 (cox1/2).